A 116-amino-acid polypeptide reads, in one-letter code: uncharacterized protein (116 aa).

The N-terminal stretch at 1-19 is a signal peptide; sequence MRWDVIILYAISRPYATRR. Positions 18–50 are disordered; it reads RRTGSHTHPRDSRYIAANQRRPPSACRVGPSPA.

This is an uncharacterized protein from Saccharomyces cerevisiae (strain ATCC 204508 / S288c) (Baker's yeast).